A 349-amino-acid chain; its full sequence is Merozoite surface protein P38 (349 aa).

Positions 1–21 are cleaved as a signal peptide; that stretch reads MKRWSIITGIVIIFCILTCKG. 2 consecutive 6-Cys domains span residues 22–149 and 153–301; these read QVEN…ISNG and KIPG…YLTN. Intrachain disulfides connect C77–C127, C157–C183, C197–C278, and C208–C276. 3 N-linked (GlcNAc...) asparagine glycosylation sites follow: N294, N295, and N301. N315 carries GPI-anchor amidated asparagine lipidation. Residues 316-349 constitute a propeptide, removed in mature form; that stretch reads SEIFERIEREEISFAFSSYLSITLILLYLFFLNF.

The protein localises to the cell surface. The protein resides in the cell membrane. The sequence is that of Merozoite surface protein P38 (PFS38) from Plasmodium falciparum (isolate 3D7).